We begin with the raw amino-acid sequence, 120 residues long: NADH-quinone oxidoreductase subunit A (120 aa).

Transmembrane regions (helical) follow at residues 10–30 (ILVFLGISLFIAVLALTMGWF), 65–85 (VAILFIIFDLETAFLFPWAVV), and 89–109 (IGWFGFWAMMVFLAILVVGFI).

The protein belongs to the complex I subunit 3 family. As to quaternary structure, NDH-1 is composed of 14 different subunits. Subunits NuoA, H, J, K, L, M, N constitute the membrane sector of the complex.

It localises to the cell inner membrane. The enzyme catalyses a quinone + NADH + 5 H(+)(in) = a quinol + NAD(+) + 4 H(+)(out). In terms of biological role, NDH-1 shuttles electrons from NADH, via FMN and iron-sulfur (Fe-S) centers, to quinones in the respiratory chain. The immediate electron acceptor for the enzyme in this species is believed to be ubiquinone. Couples the redox reaction to proton translocation (for every two electrons transferred, four hydrogen ions are translocated across the cytoplasmic membrane), and thus conserves the redox energy in a proton gradient. This Coxiella burnetii (strain Dugway 5J108-111) protein is NADH-quinone oxidoreductase subunit A.